The following is a 169-amino-acid chain: Ribosome maturation factor RimM (169 aa).

In terms of domain architecture, PRC barrel spans 97-169 (PGEYYWYQLI…VITVDWDMNF (73 aa)).

It belongs to the RimM family. As to quaternary structure, binds ribosomal protein uS19.

The protein localises to the cytoplasm. In terms of biological role, an accessory protein needed during the final step in the assembly of 30S ribosomal subunit, possibly for assembly of the head region. Essential for efficient processing of 16S rRNA. May be needed both before and after RbfA during the maturation of 16S rRNA. It has affinity for free ribosomal 30S subunits but not for 70S ribosomes. This Legionella pneumophila (strain Paris) protein is Ribosome maturation factor RimM.